A 266-amino-acid polypeptide reads, in one-letter code: Translation initiation factor 2 subunit alpha (266 aa).

An S1 motif domain is found at 12-83; sequence GEILIATVKQ…RKGTVDVSLK (72 aa).

It belongs to the eIF-2-alpha family. Heterotrimer composed of an alpha, a beta and a gamma chain.

EIF-2 functions in the early steps of protein synthesis by forming a ternary complex with GTP and initiator tRNA. This Saccharolobus islandicus (strain M.16.27) (Sulfolobus islandicus) protein is Translation initiation factor 2 subunit alpha.